The primary structure comprises 301 residues: MSLIRGLISTIYYLPKIYKWFYRPYYFLSLLMTLAFVIVRCCPGLCEHLPSQREDGDSCAFDWREVEIFMFLGAIVMMKNRRAVTVEQHIGNIFLFSKVANVVLFFRVDLRFGLLYLTLCVVFLITCKPPAYMGPENIKYFRDSTIDEELQRDSRVTWIVEFYANWSPECQSFAPIFADLSLKYTCLGLKFGKVDIGHYGAVAERYKVNPSPLCKQLPSLLMLQAGRELMRRPLVDKKGRAVSWNFTEDNIIRDFNLNEIFQKYKKFSKGEKPEEPQPVLEEESESPLEEEEEDSESKKDK.

The first 19 residues, 1 to 19 (MSLIRGLISTIYYLPKIYK), serve as a signal peptide directing secretion. Residues 20–111 (WFYRPYYFLS…VVLFFRVDLR (92 aa)) lie on the Extracellular side of the membrane. Residues 112-132 (FGLLYLTLCVVFLITCKPPAY) form a helical membrane-spanning segment. Residues 122–269 (VFLITCKPPA…IFQKYKKFSK (148 aa)) enclose the Thioredoxin domain. Over 133–301 (MGPENIKYFR…EEDSESKKDK (169 aa)) the chain is Cytoplasmic. The interval 268–301 (SKGEKPEEPQPVLEEESESPLEEEEEDSESKKDK) is disordered. Residues 280–295 (LEEESESPLEEEEEDS) are compositionally biased toward acidic residues. Residues 298-301 (KKDK) carry the Di-lysine motif motif.

In terms of assembly, monomer. Homodimer; disulfide-linked. Occurs in both reduced and oxidized monomeric form. Oxidative conditions increase homodimerization.

The protein resides in the endoplasmic reticulum membrane. Its subcellular location is the mitochondrion membrane. Endoplasmic reticulum and mitochondria-associated protein that probably functions as a regulator of cellular redox state and thereby regulates protein post-translational modification, protein folding and mitochondrial activity. This chain is Thioredoxin-related transmembrane protein 2-A, found in Danio rerio (Zebrafish).